A 183-amino-acid polypeptide reads, in one-letter code: Peptide deformylase (183 aa).

Residues C111 and H154 each coordinate Fe cation. The active site involves E155. H158 lines the Fe cation pocket.

This sequence belongs to the polypeptide deformylase family. The cofactor is Fe(2+).

It carries out the reaction N-terminal N-formyl-L-methionyl-[peptide] + H2O = N-terminal L-methionyl-[peptide] + formate. Functionally, removes the formyl group from the N-terminal Met of newly synthesized proteins. Requires at least a dipeptide for an efficient rate of reaction. N-terminal L-methionine is a prerequisite for activity but the enzyme has broad specificity at other positions. The polypeptide is Peptide deformylase (Staphylococcus aureus (strain COL)).